The primary structure comprises 160 residues: Cytochrome b6-f complex subunit 4 (160 aa).

A run of 3 helical transmembrane segments spans residues 36-56 (LLYIFPVVILGTIACIVGLSV), 95-115 (LLGIALQTLVPLGLMLIPFIE), and 128-148 (IAMAVFLFGTATTIYLGIGAA).

Belongs to the cytochrome b family. PetD subfamily. As to quaternary structure, the 4 large subunits of the cytochrome b6-f complex are cytochrome b6, subunit IV (17 kDa polypeptide, PetD), cytochrome f and the Rieske protein, while the 4 small subunits are PetG, PetL, PetM and PetN. The complex functions as a dimer.

Its subcellular location is the cellular thylakoid membrane. In terms of biological role, component of the cytochrome b6-f complex, which mediates electron transfer between photosystem II (PSII) and photosystem I (PSI), cyclic electron flow around PSI, and state transitions. This chain is Cytochrome b6-f complex subunit 4, found in Synechococcus sp. (strain CC9311).